The primary structure comprises 504 residues: Glucose-6-phosphate isomerase (504 aa).

Catalysis depends on Glu333, which acts as the Proton donor. Residues His364 and Lys473 contribute to the active site.

This sequence belongs to the GPI family.

The protein resides in the cytoplasm. It carries out the reaction alpha-D-glucose 6-phosphate = beta-D-fructose 6-phosphate. It participates in carbohydrate biosynthesis; gluconeogenesis. Its pathway is carbohydrate degradation; glycolysis; D-glyceraldehyde 3-phosphate and glycerone phosphate from D-glucose: step 2/4. Its function is as follows. Catalyzes the reversible isomerization of glucose-6-phosphate to fructose-6-phosphate. The protein is Glucose-6-phosphate isomerase of Xanthomonas campestris pv. campestris (strain B100).